The following is a 314-amino-acid chain: Phosphoribosylaminoimidazole-succinocarboxamide synthase (314 aa).

It belongs to the SAICAR synthetase family.

It catalyses the reaction 5-amino-1-(5-phospho-D-ribosyl)imidazole-4-carboxylate + L-aspartate + ATP = (2S)-2-[5-amino-1-(5-phospho-beta-D-ribosyl)imidazole-4-carboxamido]succinate + ADP + phosphate + 2 H(+). The protein operates within purine metabolism; IMP biosynthesis via de novo pathway; 5-amino-1-(5-phospho-D-ribosyl)imidazole-4-carboxamide from 5-amino-1-(5-phospho-D-ribosyl)imidazole-4-carboxylate: step 1/2. The sequence is that of Phosphoribosylaminoimidazole-succinocarboxamide synthase from Bacteroides fragilis (strain ATCC 25285 / DSM 2151 / CCUG 4856 / JCM 11019 / LMG 10263 / NCTC 9343 / Onslow / VPI 2553 / EN-2).